Reading from the N-terminus, the 404-residue chain is Caspase-1 (404 aa).

The CARD domain maps to 1–91 (MADKVLKEKR…YLAGTLGLSA (91 aa)). The propeptide occupies 1 to 119 (MADKVLKEKR…SFPAPQAVQD (119 aa)). K134 is covalently cross-linked (Glycyl lysine isopeptide (Lys-Gly) (interchain with G-Cter in ubiquitin)). Active-site residues include H237 and C285. Residues 298–316 (SVGVSGNLSLPTTEEFEDD) constitute a propeptide, interdomain linker. Position 302 is a phosphoserine (S302).

Belongs to the peptidase C14A family. As to quaternary structure, heterotetramer that consists of two anti-parallel arranged heterodimers, each one formed by a 20 kDa (Caspase-1 subunit p20) and a 10 kDa (Caspase-1 subunit p10) subunit. May be a component of the inflammasome, a protein complex which also includes PYCARD, CARD8 and NLRP2 and whose function would be the activation of pro-inflammatory caspases. Component of the AIM2 PANoptosome complex, a multiprotein complex that drives inflammatory cell death (PANoptosis). Interacts with CARD8; interacts with the released C-terminus of CARD8 which forms an inflammasome and directly activates CASP1 to promote pyroptosis. Both the p10 and p20 subunits interact with MEFV. Interacts with CARD17P/INCA and CARD18. Interacts with SERPINB1; this interaction regulates CASP1 activity. Heterotetramer that consists of two anti-parallel arranged heterodimers, each one formed by a 20 kDa (Caspase-1 subunit p20) and a 10 kDa (Caspase-1 subunit p10) subunit. Can form a heterodimer with isoform epsilon which then has an inhibitory effect. In terms of assembly, heterotetramer that consists of two anti-parallel arranged heterodimers, each one formed by a 20 kDa (Caspase-1 subunit p20) and a 10 kDa (Caspase-1 subunit p10) subunit. As to quaternary structure, can form a heterodimer with Caspase-1 subunit p20 which then has an inhibitory effect. The two subunits are derived from the precursor sequence by an autocatalytic mechanism. Post-translationally, ubiquitinated via 'Lys-11'-linked polyubiquitination. Deubiquitinated by USP8. In terms of processing, cleavage in the interdomain linker region is required to induce pyroptosis. As to expression, expressed in larger amounts in spleen and lung. Detected in liver, heart, small intestine, colon, thymus, prostate, skeletal muscle, peripheral blood leukocytes, kidney and testis. No expression in the brain.

The protein resides in the cytoplasm. It is found in the cell membrane. It catalyses the reaction Strict requirement for an Asp residue at position P1 and has a preferred cleavage sequence of Tyr-Val-Ala-Asp-|-.. With respect to regulation, (Microbial infection) Specifically inhibited by the cowpox virus Crma protein. Its function is as follows. Thiol protease involved in a variety of inflammatory processes by proteolytically cleaving other proteins, such as the precursors of the inflammatory cytokines interleukin-1 beta (IL1B) and interleukin 18 (IL18) as well as the pyroptosis inducer Gasdermin-D (GSDMD), into active mature peptides. Plays a key role in cell immunity as an inflammatory response initiator: once activated through formation of an inflammasome complex, it initiates a pro-inflammatory response through the cleavage of the two inflammatory cytokines IL1B and IL18, releasing the mature cytokines which are involved in a variety of inflammatory processes. Cleaves a tetrapeptide after an Asp residue at position P1. Also initiates pyroptosis, a programmed lytic cell death pathway, through cleavage of GSDMD. In contrast to cleavage of interleukin IL1B, recognition and cleavage of GSDMD is not strictly dependent on the consensus cleavage site but depends on an exosite interface on CASP1 that recognizes and binds the Gasdermin-D, C-terminal (GSDMD-CT) part. Cleaves and activates CASP7 in response to bacterial infection, promoting plasma membrane repair. Upon inflammasome activation, during DNA virus infection but not RNA virus challenge, controls antiviral immunity through the cleavage of CGAS, rendering it inactive. In apoptotic cells, cleaves SPHK2 which is released from cells and remains enzymatically active extracellularly. Apoptosis inactive. The chain is Caspase-1 (CASP1) from Homo sapiens (Human).